The sequence spans 316 residues: Iron-sulfur cluster assembly SufBD family protein MJ0034 (316 aa).

The protein belongs to the iron-sulfur cluster assembly SufBD family.

The sequence is that of Iron-sulfur cluster assembly SufBD family protein MJ0034 from Methanocaldococcus jannaschii (strain ATCC 43067 / DSM 2661 / JAL-1 / JCM 10045 / NBRC 100440) (Methanococcus jannaschii).